A 332-amino-acid chain; its full sequence is Ectoine dioxygenase (332 aa).

Residues 1–10 show a composition bias toward polar residues; it reads MSVQTSSNRP. The disordered stretch occupies residues 1–47; sequence MSVQTSSNRPLPQANLHIATETPEADSRIRSAPRPGQDPYPTRLSEP. Gln163 contributes to the L-ectoine binding site. A 2-oxoglutarate-binding site is contributed by Lys169. The Fe cation site is built by His180, Asp182, and His281.

Belongs to the PhyH family. EctD subfamily. As to quaternary structure, homodimer. Fe(2+) is required as a cofactor.

It carries out the reaction L-ectoine + 2-oxoglutarate + O2 = 5-hydroxyectoine + succinate + CO2. Involved in the biosynthesis of 5-hydroxyectoine, called compatible solute, which helps organisms to survive extreme osmotic stress by acting as a highly soluble organic osmolyte. Catalyzes the 2-oxoglutarate-dependent selective hydroxylation of L-ectoine to yield (4S,5S)-5-hydroxyectoine. This Halomonas elongata (strain ATCC 33173 / DSM 2581 / NBRC 15536 / NCIMB 2198 / 1H9) protein is Ectoine dioxygenase.